The sequence spans 327 residues: MKFGLFFLNFINSTTVQEQSIVRMQEITEYVDKLNFEQILVYENHFSDNGVVGAPLTVSGFLLGLTEKIKIGSLNHIITTHHPVAIAEEACLLDQLSEGRFILGFSDCEKKDEMHFFNRPVEYQQQLFEECYEIINDALTTGYCNPDNDFYSFPKISVNPHAYTPGGPRKYVTATSHHIVEWAAKKGIPLIFKWDDSNDVRYEYAERYKAVADKYDVDLSEIDHQLMILVNYNEDSNKAKQETRAFISDYVLEMHPNENFENKLEEIIAENAVGNYTECITAAKLAIEKCGAKSVLLSFEPMNDLMSQKNVINIVDDNIKKYHMEYT.

This sequence belongs to the bacterial luciferase oxidoreductase family. In terms of assembly, heterodimer of an alpha and a beta chain.

It carries out the reaction a long-chain fatty aldehyde + FMNH2 + O2 = a long-chain fatty acid + hnu + FMN + H2O + 2 H(+). Its function is as follows. Light-emitting reaction in luminous bacteria. The specific role of the beta subunit is unknown, but it is absolutely required for bioluminescence activity. In Photorhabdus luminescens (Xenorhabdus luminescens), this protein is Alkanal monooxygenase beta chain (luxB).